We begin with the raw amino-acid sequence, 2364 residues long: Actin-binding protein F (2364 aa).

The segment covering 138–157 (THQTSPTTETTTTPSSSSSS) has biased composition (low complexity). 4 disordered regions span residues 138 to 168 (THQTSPTTETTTTPSSSSSSSHDDKSESTLD), 1087 to 1111 (QASKYNESEVKDEKSMRNRQVEKRR), 1412 to 1435 (NNNSNNNNNTTNSNSFGDAKRAPM), and 1929 to 2088 (KLIS…SEFN). Residues 1092-1111 (NESEVKDEKSMRNRQVEKRR) are compositionally biased toward basic and acidic residues. Composition is skewed to low complexity over residues 1412–1428 (NNNSNNNNNTTNSNSFG) and 1932–1960 (SSSTTTDSKSTHSSVISSSSSSNLSTTTD). Positions 1960–2017 (DSSKDKKKLEKEEKQREKERKQKEKEDKKREKEELKKKEKEEKKKKEEEKKLKKKSGS) form a coiled coil. Residues 1961–2010 (SSKDKKKLEKEEKQREKERKQKEKEDKKREKEELKKKEKEEKKKKEEEKK) show a composition bias toward basic and acidic residues. Low complexity predominate over residues 2027-2047 (ATPTTTTTTEATTTTTTTTAT). Residues 2052-2070 (IKPEKIASDDEHDDHHHDE) are compositionally biased toward basic and acidic residues. Acidic residues predominate over residues 2071-2081 (HDEEDDDDEPL). A coiled-coil region spans residues 2129 to 2173 (VQRWNSLFKDLRNKVDQVSNKDSVEIDYEKEIDRERRQNKMASNE).

As to quaternary structure, interacts with actin.

Its subcellular location is the nucleus. It is found in the cytoplasm. The protein resides in the cytoskeleton. The sequence is that of Actin-binding protein F (abpF) from Dictyostelium discoideum (Social amoeba).